The primary structure comprises 312 residues: Phospho-N-acetylmuramoyl-pentapeptide-transferase (312 aa).

The next 9 helical transmembrane spans lie at 1-21, 48-68, 76-96, 115-135, 140-160, 165-185, 214-234, 238-258, and 289-309; these read MMVV…HYSK, GVAF…FGGI, EVMI…DDFL, FPLQ…LASH, GFMS…FVMV, AFNF…IVLL, VFMG…AYAL, VWLL…VVIQ, and VTLR…WLMG.

It belongs to the glycosyltransferase 4 family. MraY subfamily. Mg(2+) serves as cofactor.

The protein resides in the cell membrane. The catalysed reaction is UDP-N-acetyl-alpha-D-muramoyl-L-alanyl-gamma-D-glutamyl-meso-2,6-diaminopimeloyl-D-alanyl-D-alanine + di-trans,octa-cis-undecaprenyl phosphate = di-trans,octa-cis-undecaprenyl diphospho-N-acetyl-alpha-D-muramoyl-L-alanyl-D-glutamyl-meso-2,6-diaminopimeloyl-D-alanyl-D-alanine + UMP. The protein operates within cell wall biogenesis; peptidoglycan biosynthesis. In terms of biological role, catalyzes the initial step of the lipid cycle reactions in the biosynthesis of the cell wall peptidoglycan: transfers peptidoglycan precursor phospho-MurNAc-pentapeptide from UDP-MurNAc-pentapeptide onto the lipid carrier undecaprenyl phosphate, yielding undecaprenyl-pyrophosphoryl-MurNAc-pentapeptide, known as lipid I. In Deinococcus radiodurans (strain ATCC 13939 / DSM 20539 / JCM 16871 / CCUG 27074 / LMG 4051 / NBRC 15346 / NCIMB 9279 / VKM B-1422 / R1), this protein is Phospho-N-acetylmuramoyl-pentapeptide-transferase.